The chain runs to 338 residues: MTIRIAINGFGRIGRSVLRALYESGRRAEITVVAINELASAEGMAHLLKYDSSHGRFSWDVRQECDQLYVGDDCIRLLHQAEIQALPWRELGVDIVLDCSGVYGSREDGEAHLAAGAKKVLFSHPGTADLDATVVFGVNHQQLEREHRIVSNASCTTNCIIPVIKLLDDAFGIENGTVTTIHSSMNDQPVIDAYHHDLRRTRAASQSIIPVDTKLSAGITRIFPQFVDRFEAISVRVPTINVTAIDLSVSVRKAVNVNEINALLQKSAHESFRGIVDYTELPLVSADFNHDPHSAIVDGTQTRVSGQHLIKTLVWCDNEWGFANRMLDTTRAMAACGF.

12–13 (RI) is a binding site for NAD(+). Substrate-binding positions include 154–156 (SCT), Arg200, 213–214 (TK), and Arg236. The active-site Nucleophile is Cys155. Asn318 is an NAD(+) binding site.

Belongs to the glyceraldehyde-3-phosphate dehydrogenase family. Epd subfamily. In terms of assembly, homotetramer.

The protein localises to the cytoplasm. It catalyses the reaction D-erythrose 4-phosphate + NAD(+) + H2O = 4-phospho-D-erythronate + NADH + 2 H(+). It functions in the pathway cofactor biosynthesis; pyridoxine 5'-phosphate biosynthesis; pyridoxine 5'-phosphate from D-erythrose 4-phosphate: step 1/5. Catalyzes the NAD-dependent conversion of D-erythrose 4-phosphate to 4-phosphoerythronate. This is D-erythrose-4-phosphate dehydrogenase from Pectobacterium carotovorum subsp. carotovorum (strain PC1).